We begin with the raw amino-acid sequence, 250 residues long: Uracil-DNA glycosylase (250 aa).

Asp-78 serves as the catalytic Proton acceptor. The interval Arg-228–Leu-250 is disordered.

Belongs to the uracil-DNA glycosylase (UDG) superfamily. UNG family.

The protein localises to the cytoplasm. It catalyses the reaction Hydrolyzes single-stranded DNA or mismatched double-stranded DNA and polynucleotides, releasing free uracil.. Its function is as follows. Excises uracil residues from the DNA which can arise as a result of misincorporation of dUMP residues by DNA polymerase or due to deamination of cytosine. This Bordetella parapertussis (strain 12822 / ATCC BAA-587 / NCTC 13253) protein is Uracil-DNA glycosylase.